Consider the following 916-residue polypeptide: Chitin synthase B (916 aa).

Disordered regions lie at residues M1–H84 and S114–L141. A glycan (N-linked (GlcNAc...) asparagine) is linked at N18. The span at R60–E75 shows a compositional bias: polar residues. N546 carries an N-linked (GlcNAc...) asparagine glycan. Helical transmembrane passes span M572–A594, I628–A648, S663–V683, I715–L735, S743–F763, L845–M865, and A884–L904.

Belongs to the chitin synthase family. Class III subfamily.

The protein localises to the cell membrane. It carries out the reaction [(1-&gt;4)-N-acetyl-beta-D-glucosaminyl](n) + UDP-N-acetyl-alpha-D-glucosamine = [(1-&gt;4)-N-acetyl-beta-D-glucosaminyl](n+1) + UDP + H(+). Functionally, polymerizes chitin, a structural polymer of the cell wall and septum, by transferring the sugar moiety of UDP-GlcNAc to the non-reducing end of the growing chitin polymer. Involved in hyphal growth and more particularly in branching. In Aspergillus oryzae (strain ATCC 42149 / RIB 40) (Yellow koji mold), this protein is Chitin synthase B.